Reading from the N-terminus, the 552-residue chain is uncharacterized protein (552 aa).

Residue 29 to 36 participates in ATP binding; sequence GENAWGKS. The Toprim domain occupies 379–469; the sequence is RCWLLVEGET…AEREHLTALP (91 aa).

This is an uncharacterized protein from Escherichia coli (strain K12).